Here is a 736-residue protein sequence, read N- to C-terminus: 1,4-alpha-glucan branching enzyme GlgB (736 aa).

The active-site Nucleophile is the aspartate 415. Glutamate 470 functions as the Proton donor in the catalytic mechanism.

The protein belongs to the glycosyl hydrolase 13 family. GlgB subfamily. As to quaternary structure, monomer.

The enzyme catalyses Transfers a segment of a (1-&gt;4)-alpha-D-glucan chain to a primary hydroxy group in a similar glucan chain.. The protein operates within glycan biosynthesis; glycogen biosynthesis. Its function is as follows. Catalyzes the formation of the alpha-1,6-glucosidic linkages in glycogen by scission of a 1,4-alpha-linked oligosaccharide from growing alpha-1,4-glucan chains and the subsequent attachment of the oligosaccharide to the alpha-1,6 position. The sequence is that of 1,4-alpha-glucan branching enzyme GlgB from Paraburkholderia xenovorans (strain LB400).